Reading from the N-terminus, the 278-residue chain is Elongation factor Ts 2, mitochondrial (278 aa).

The protein belongs to the EF-Ts family.

It localises to the mitochondrion. Its function is as follows. Associates with the EF-Tu.GDP complex and induces the exchange of GDP to GTP. It remains bound to the aminoacyl-tRNA.EF-Tu.GTP complex up to the GTP hydrolysis stage on the ribosome. The chain is Elongation factor Ts 2, mitochondrial from Trypanosoma cruzi (strain CL Brener).